Reading from the N-terminus, the 132-residue chain is ATP synthase epsilon chain (132 aa).

It belongs to the ATPase epsilon chain family. As to quaternary structure, F-type ATPases have 2 components, CF(1) - the catalytic core - and CF(0) - the membrane proton channel. CF(1) has five subunits: alpha(3), beta(3), gamma(1), delta(1), epsilon(1). CF(0) has three main subunits: a, b and c.

It is found in the cell membrane. Functionally, produces ATP from ADP in the presence of a proton gradient across the membrane. The protein is ATP synthase epsilon chain (atpC) of Bacillus sp. (strain PS3).